We begin with the raw amino-acid sequence, 52 residues long: Repressor-like protein SSo7c3 (52 aa).

The SpoVT-AbrB domain maps to 4–51 (EEVVKVSRNYQVTIPAKVRQKFPVKEGDLVKVIYDENGGVVKIQILDS).

This chain is Repressor-like protein SSo7c3, found in Saccharolobus solfataricus (strain ATCC 35092 / DSM 1617 / JCM 11322 / P2) (Sulfolobus solfataricus).